Here is a 118-residue protein sequence, read N- to C-terminus: UPF0295 protein BcerKBAB4_0454 (118 aa).

Transmembrane regions (helical) follow at residues 12–32 and 43–63; these read IRTF…LGVF and FMMV…WIGM.

This sequence belongs to the UPF0295 family.

It localises to the cell membrane. This Bacillus mycoides (strain KBAB4) (Bacillus weihenstephanensis) protein is UPF0295 protein BcerKBAB4_0454.